A 274-amino-acid chain; its full sequence is 2,3,4,5-tetrahydropyridine-2,6-dicarboxylate N-succinyltransferase (274 aa).

The protein belongs to the transferase hexapeptide repeat family.

It localises to the cytoplasm. It carries out the reaction (S)-2,3,4,5-tetrahydrodipicolinate + succinyl-CoA + H2O = (S)-2-succinylamino-6-oxoheptanedioate + CoA. The protein operates within amino-acid biosynthesis; L-lysine biosynthesis via DAP pathway; LL-2,6-diaminopimelate from (S)-tetrahydrodipicolinate (succinylase route): step 1/3. This Alteromonas mediterranea (strain DSM 17117 / CIP 110805 / LMG 28347 / Deep ecotype) protein is 2,3,4,5-tetrahydropyridine-2,6-dicarboxylate N-succinyltransferase.